A 601-amino-acid chain; its full sequence is Potassium-transporting ATPase potassium-binding subunit (601 aa).

12 helical membrane-spanning segments follow: residues 6 to 26 (IMLL…LGLF), 65 to 85 (SYAI…YAVQ), 136 to 156 (ALTG…FALI), 179 to 199 (LYIL…QGVI), 283 to 303 (FSNF…CFTF), 313 to 333 (GWAV…IVMT), 367 to 387 (FGIS…CGAV), 397 to 417 (MGGF…GGVG), 419 to 439 (GLYG…LMIG), 458 to 478 (SIAI…AVLV), 524 to 544 (MLAI…LAIA), and 566 to 586 (LFVA…YVPA).

This sequence belongs to the KdpA family. The system is composed of three essential subunits: KdpA, KdpB and KdpC.

The protein localises to the cell inner membrane. In terms of biological role, part of the high-affinity ATP-driven potassium transport (or Kdp) system, which catalyzes the hydrolysis of ATP coupled with the electrogenic transport of potassium into the cytoplasm. This subunit binds the periplasmic potassium ions and delivers the ions to the membrane domain of KdpB through an intramembrane tunnel. The chain is Potassium-transporting ATPase potassium-binding subunit from Herminiimonas arsenicoxydans.